The chain runs to 317 residues: Proline-rich protein 2 (317 aa).

The first 16 residues, Met-1 to Ala-16, serve as a signal peptide directing secretion. The disordered stretch occupies residues Ser-15–Gln-317. Residues Gln-32–Pro-44 are compositionally biased toward pro residues. Residue Asn-46 is glycosylated (N-linked (GlcNAc...) asparagine). Pro residues-rich tracts occupy residues Gly-51–Gly-183 and Gln-204–Gly-288. A compositionally biased stretch (low complexity) spans Pro-289–Pro-305. Residues Gln-306–Gln-317 show a composition bias toward pro residues.

It localises to the secreted. This chain is Proline-rich protein 2 (Prp2), found in Mus musculus (Mouse).